The primary structure comprises 532 residues: Omega-hydroxyceramide transacylase (532 aa).

The region spanning 16 to 185 (ISFSGSGFLS…TGMQPCAFWT (170 aa)) is the PNPLA domain. Positions 51–55 (GTSAG) match the GXSXG motif. Serine 53 serves as the catalytic Nucleophile. Aspartate 172 serves as the catalytic Proton acceptor. The short motif at 172–174 (DGG) is the DGA/G element. 2 disordered regions span residues 290–457 (PERS…ELGQ) and 489–532 (VTES…SKVQ). Residues 310–322 (PHKEWVPKGDGRG) are compositionally biased toward basic and acidic residues. Low complexity-rich tracts occupy residues 380-389 (PPSSTPGSSL) and 397-411 (SPLS…SGSP). Positions 517-532 (GFPRHSGSKKPSSKVQ) are enriched in basic residues.

Expressed in the digestive system. Expressed in the epidermis of skin keratinocytes. Strongly expressed in the granular layer. Expressed in the upper epidermis and eccrine sweat glands of the dermis and in the region of keratin filament bundles, which is more pronounced in upper epidermal layers and in the lower cornified layers.

It is found in the cytoplasm. It carries out the reaction an N-(omega-hydroxy-ultra-long chain fatty acyl)-sphingoid base + a (9Z,12Z)-octadecadienoyl-containing triacyl-sn-glycerol = an N-[omega-(9Z,12Z-octadecadienoyloxy)-O-ultra-long chain fatty acyl]-sphingoid base + a diacylglycerol. It catalyses the reaction an N-(omega-hydroxy-ultra-long chain fatty acyl)-sphing-4-enine + a (9Z,12Z)-octadecadienoyl-containing triacyl-sn-glycerol = an N-(omega-(9Z,12Z-octadecadienoyloxy)-ultra-long chain fatty acyl)-sphing-4-enine + a diacylglycerol. The enzyme catalyses N-(30-hydroxytriacontanoyl)-sphing-4-enine + 1,2,3-tri-(9Z,12Z)-octadecadienoylglycerol = N-[30-(9Z,12Z-octadecadienoyloxy)-triacontanoyl]-sphing-4-enine + di-(9Z,12Z)-octadecadienoylglycerol. The catalysed reaction is N-(28-hydroxyoctacosanoyl)-sphing-4-enine + a (9Z,12Z)-octadecadienoyl-containing triacyl-sn-glycerol = N-(28-(9Z,12Z-octadecadienoyloxy)-octacosanoyl)-sphing-4-enine + a diacylglycerol. It carries out the reaction N-(32-hydroxydotriacontanoyl)-sphing-4-enine + a (9Z,12Z)-octadecadienoyl-containing triacyl-sn-glycerol = N-(32-(9Z,12Z-octadecadienoyloxy)-dotricontanoyl)-sphing-4-enine + a diacylglycerol. It catalyses the reaction N-(32-hydroxydotriacontenoyl)-sphing-4-enine + a (9Z,12Z)-octadecadienoyl-containing triacyl-sn-glycerol = an N-(32-(9Z,12Z-octadecadienoyloxy)-dotriacontenoyl)-sphing-4-enine + a diacylglycerol. The enzyme catalyses an N-(34-hydroxytetratriacontenoyl)-sphing-4-enine + a (9Z,12Z)-octadecadienoyl-containing triacyl-sn-glycerol = an N-(34-(9Z,12Z-octadecadienoyloxy)-tetratriacontenoyl)-sphing-4-enine + a diacylglycerol. The catalysed reaction is an N-(34-hydroxytetratriacontadienoyl)-sphing-4-enine + a (9Z,12Z)-octadecadienoyl-containing triacyl-sn-glycerol = an N-(34-(9Z,12Z-octadecadienoyloxy)-tetratriacontadienoyl)-sphing-4-enine + a diacylglycerol. It carries out the reaction an N-(36-hydroxyhexatriacontenoyl)-sphing-4-enine + a (9Z,12Z)-octadecadienoyl-containing triacyl-sn-glycerol = an N-(36-(9Z,12Z-octadecadienoyloxy)-hexatriacontenoyl)-sphing-4-enine + a diacylglycerol. It catalyses the reaction an N-(36-hydroxyhexatriacontadienoyl)-sphing-4-enine + a (9Z,12Z)-octadecadienoyl-containing triacyl-sn-glycerol = an N-(36-(9Z,12Z-octadecadienoyloxy)-hexatriacontadienoyl)-sphing-4-enine + a diacylglycerol. The enzyme catalyses an N-(38-hydroxyoctatriacontenoyl)-sphing-4-enine + a (9Z,12Z)-octadecadienoyl-containing triacyl-sn-glycerol = an N-(38-(9Z,12Z-octadecadienoyloxy)-octatriacontenoyl)-sphing-4-enine + a diacylglycerol. Its function is as follows. Omega-hydroxyceramide transacylase involved in the synthesis of omega-O-acylceramides (esterified omega-hydroxyacyl-sphingosine; EOS), which are extremely hydrophobic lipids involved in skin barrier formation. Catalyzes the last step of the synthesis of omega-O-acylceramides by transferring linoleic acid from triglycerides to an omega-hydroxyceramide. Omega-O-acylceramides, are required for the biogenesis of lipid lamellae in the stratum corneum and the formation of the cornified lipid envelope which are essential for the epidermis barrier function. These lipids also play a role in keratinocyte differentiation. May also act on omega-hydroxylated ultra-long chain fatty acids (omega-OH ULCFA) and acylglucosylceramides (GlcEOS). In Homo sapiens (Human), this protein is Omega-hydroxyceramide transacylase.